We begin with the raw amino-acid sequence, 109 residues long: Defensin-B5 (109 aa).

The first 20 residues, 1-20 (MRGLLPFLFLLSFFLSPIQA), serve as a signal peptide directing secretion. A disordered region spans residues 21-44 (QPEGREEELEETWSEDRDQAPPRV). Positions 21 to 70 (QPEGREEELEETWSEDRDQAPPRVVEESEVVGAENEAGLAAGRSYPWIIL) are excised as a propeptide. Residues 34 to 44 (SEDRDQAPPRV) are compositionally biased toward basic and acidic residues. 3 disulfide bridges follow: cysteine 73-cysteine 101, cysteine 80-cysteine 95, and cysteine 85-cysteine 102. Residues 107-109 (AVP) constitute a propeptide that is removed on maturation.

Belongs to the beta-defensin family. Highly expressed in kidney, and expressed at lower levels in testis.

The protein resides in the secreted. Its function is as follows. Has antimicrobial activity. This is Defensin-B5 from Ornithorhynchus anatinus (Duckbill platypus).